We begin with the raw amino-acid sequence, 155 residues long: Ribosomal RNA large subunit methyltransferase H (155 aa).

Residues leucine 72, glycine 103, and 122–127 (LSPLTL) each bind S-adenosyl-L-methionine.

The protein belongs to the RNA methyltransferase RlmH family. In terms of assembly, homodimer.

It is found in the cytoplasm. It carries out the reaction pseudouridine(1915) in 23S rRNA + S-adenosyl-L-methionine = N(3)-methylpseudouridine(1915) in 23S rRNA + S-adenosyl-L-homocysteine + H(+). In terms of biological role, specifically methylates the pseudouridine at position 1915 (m3Psi1915) in 23S rRNA. This Haemophilus influenzae (strain PittGG) protein is Ribosomal RNA large subunit methyltransferase H.